Consider the following 399-residue polypeptide: Elongation factor Tu (399 aa).

The tr-type G domain occupies 10 to 204 (KDHVNIGTIG…AVDDYIDTPE (195 aa)). The G1 stretch occupies residues 19-26 (GHVDHGKT). A GTP-binding site is contributed by 19 to 26 (GHVDHGKT). Thr26 is a binding site for Mg(2+). The G2 stretch occupies residues 60–64 (GITIN). Residues 81–84 (DCPG) are G3. Residues 81–85 (DCPGH) and 136–139 (NKKD) each bind GTP. The G4 stretch occupies residues 136–139 (NKKD). A G5 region spans residues 174–176 (SAL).

The protein belongs to the TRAFAC class translation factor GTPase superfamily. Classic translation factor GTPase family. EF-Tu/EF-1A subfamily. In terms of assembly, monomer.

It is found in the cytoplasm. The catalysed reaction is GTP + H2O = GDP + phosphate + H(+). Functionally, GTP hydrolase that promotes the GTP-dependent binding of aminoacyl-tRNA to the A-site of ribosomes during protein biosynthesis. This Synechocystis sp. (strain ATCC 27184 / PCC 6803 / Kazusa) protein is Elongation factor Tu.